Reading from the N-terminus, the 658-residue chain is Ubiquilin-3 (658 aa).

In terms of domain architecture, Ubiquitin-like spans 22–96 (IRVTVKTPKD…VHLVIKMQRR (75 aa)). Residues 194 to 233 (NPHMQHLIQQNPEIGHILNNPEIMRQTMEFLRNPSMMQEM) enclose the STI1 domain. Low complexity predominate over residues 280-291 (TATTASTTTTSS). 2 disordered regions span residues 280–336 (TATT…RNRL) and 362–478 (YLQG…PESP). Residues 312–323 (VSGGRQGRGGRQ) are compositionally biased toward gly residues. Polar residues-rich tracts occupy residues 362–379 (YLQGTVPTSNPSQESPLS), 389–400 (SSPKSGSGQSLP), and 438–469 (TGPSTSLPNLTSQIGDSANRSSFVSTPSSLMS). Positions 614–658 (QLEAHFRVQLEQLRAMGFLNLEANLQALIATEGDVDAAVEKLRKS) constitute a UBA domain.

As to expression, testis-specific (at protein level).

This Mus musculus (Mouse) protein is Ubiquilin-3 (Ubqln3).